We begin with the raw amino-acid sequence, 356 residues long: MAGLVNINIEFKELATSFIQRSKAGIVAIILKDTTKMYKELTSEDDIPISLSADNKKYIKYGFVGATDNEKVLRPSKVIISTFTEDGKVEDILEELESVEFNYLCMPEAIEAEKTKIVTWIKKIREEESTEAKAVLANIKADNEAIINFTENVVVDGEEITAEKYTTRVASLIASTPNTQSITYAPLDEVESIVKIDKASADAKVQAGELILRRLSGKIRIARGINSLTTLTAEKGEIFQKIKLVDTKDLISKDIKNIYVEKYLRKCPNTYDNKCLFIVAVQSYLTELAKQELIDSNFTVEIDLEKQKEYLEGKKIAVSKMKENEIKEANTGSNGFYLINLKLVDAMEDINIRVQM.

This sequence belongs to the myoviridae tail sheath protein family. In terms of assembly, homomultimer.

It localises to the virion. The protein resides in the host cytoplasm. In terms of biological role, polymerizes as an extended structure around the baseplate-tail tube complex. During ejection, the sheath shifts to a contracted form, thereby making the inner tail tube protrude through the host cell envelope. This chain is Tail sheath protein, found in Clostridioides difficile (Peptoclostridium difficile).